We begin with the raw amino-acid sequence, 159 residues long: MAEEKEVVLTKEGLEKLENELEHLKSVKREEVAERIKQAIAFGDITENSEYEDAKNEQAFIEGRIISLEKTLKKARLMEDEDIRTDVVSLGSRITLKEMKSGREVTVTLVSSVESKLKDGKISDESPVGKAIMGKKVKSTVSVEAPAGTIKYKIIKVEK.

Residues Met1–Arg76 are a coiled coil.

It belongs to the GreA/GreB family.

Functionally, necessary for efficient RNA polymerase transcription elongation past template-encoded arresting sites. The arresting sites in DNA have the property of trapping a certain fraction of elongating RNA polymerases that pass through, resulting in locked ternary complexes. Cleavage of the nascent transcript by cleavage factors such as GreA or GreB allows the resumption of elongation from the new 3'terminus. GreA releases sequences of 2 to 3 nucleotides. The chain is Transcription elongation factor GreA from Syntrophomonas wolfei subsp. wolfei (strain DSM 2245B / Goettingen).